We begin with the raw amino-acid sequence, 1904 residues long: Voltage-dependent calcium channel type A subunit alpha-1 (1904 aa).

A disordered region spans residues 1–45 (MLGGVGGRHMSTRRRGSSPLVRGGAGLTGYAGPGASGNSNDVAAI). The span at 23–35 (GGAGLTGYAGPGA) shows a compositional bias: gly residues. Residues 30–168 (YAGPGASGNS…KHTRFIIEWP (139 aa)) lie on the Cytoplasmic side of the membrane. An I repeat occupies 155–447 (NCIRKHTRFI…LVLGVLSGEF (293 aa)). Residues 169 to 187 (PFEYAVLLTIIANCVVLAL) form a helical membrane-spanning segment. At 188-205 (EEHLPKQDKTILAQKLEA) the chain is on the extracellular side. The chain crosses the membrane as a helical span at residues 206–225 (TEIYFLGIFCVEASLKILAL). Topologically, residues 226–237 (GFVLHRGSYLRN) are cytoplasmic. Residues 238–259 (IWNIMDFFVVVTGFITAFSQGI) traverse the membrane as a helical segment. Residues 260 to 264 (ELDMD) are Extracellular-facing. Residues 265-283 (LRTLRAIRVLRPLKLVSGI) traverse the membrane as a helical segment. Residues 284-302 (PSLQVVLKSIIKAMAPLLQ) are Cytoplasmic-facing. Residues 303 to 322 (IGLLVLFAIVIFAIIGLEFY) traverse the membrane as a helical segment. The Extracellular portion of the chain corresponds to 323 to 419 (SGTLHKTCYS…WTNDALGSTY (97 aa)). Residues N353 and N367 are each glycosylated (N-linked (GlcNAc...) asparagine). A helical membrane pass occupies residues 420 to 444 (NWIYFIPLIVLGSFFMLNLVLGVLS). Residues 445-568 (GEFAKEREKV…YWIRKSVKSQ (124 aa)) are Cytoplasmic-facing. Residues 513 to 543 (KKLGKSKSTDTEEEEGDDDQDDGELSSSTKE) form a disordered region. Positions 523–536 (TEEEEGDDDQDDGE) are enriched in acidic residues. An II repeat occupies 554–797 (EKRFRYWIRK…VFLAIAVDNL (244 aa)). The chain crosses the membrane as a helical span at residues 569-587 (KFYWFVIVLVFFNTVCVAV). At 588–602 (EHYGQPQWLTDFLYF) the chain is on the extracellular side. The chain crosses the membrane as a helical span at residues 603 to 622 (AEFVFLALFMLEMFIKVYAL). The Cytoplasmic portion of the chain corresponds to 623 to 630 (GPRTYFDS). A helical membrane pass occupies residues 631–649 (SFNRFDCVVISGSIFEVIW). Over 650-658 (SEVKSGSFG) the chain is Extracellular. Residues 659-677 (LSVLRALRLLRIFKVTKYW) form a helical membrane-spanning segment. Topologically, residues 678 to 696 (KSLRNLVISLLSSMRSIIS) are cytoplasmic. Residues 697–716 (LLFLLFLFILIFALLGMQLF) form a helical membrane-spanning segment. Over 717-769 (GGQFNFDSGTPPTNFNTFPIALLTVFQILTGEDWNEVMYQGIESQGGHKKGMI) the chain is Extracellular. The chain crosses the membrane as a helical span at residues 770-794 (YSLYFIVLVLFGNYTLLNVFLAIAV). The Cytoplasmic segment spans residues 795-895 (DNLANAQELS…VRRAAHWVVN (101 aa)). The tract at residues 827 to 869 (QSLQNPKDGGAPKVEICPPNGKGGKQSSEEEKKQDEDDDTGPK) is disordered. The stretch at 890-1177 (AHWVVNLRYF…IITFQEQGEA (288 aa)) is one III repeat. Residues 896-914 (LRYFDFFIMVVISLSSIAL) traverse the membrane as a helical segment. Residues 915-930 (AAEDPVWEDSPRNEVL) are Extracellular-facing. Residues 931–950 (NYFDYAFTGVFTVEMILKII) form a helical membrane-spanning segment. The Cytoplasmic segment spans residues 951-962 (DLGIILHPGSYL). Residues 963–981 (REFWNIMDAVVVICAAVSF) traverse the membrane as a helical segment. The Extracellular segment spans residues 982–994 (AFDMTGSSAGQNL). N993 carries an N-linked (GlcNAc...) asparagine glycan. Residues 995–1013 (STIKSLRVLRVLRPLKTIK) traverse the membrane as a helical segment. Topologically, residues 1014–1032 (RVPKLKAVFDCVVNSLKNV) are cytoplasmic. A helical transmembrane segment spans residues 1033–1052 (INILIVYILFQFIFAVIAVQ). The Extracellular portion of the chain corresponds to 1053 to 1141 (LFNGKFFYCS…EDKGPIQNFR (89 aa)). The helical transmembrane segment at 1142–1166 (IEMSIFYIVYFIVFPFFFVNIFVAL) threads the bilayer. The Cytoplasmic portion of the chain corresponds to 1167–1221 (IIITFQEQGEAELQDGEIDKNQKSCIDFTIQARPLERYMPKERNSVKYKIWRIVV). The IV repeat unit spans residues 1214 to 1470 (YKIWRIVVST…DNFDYLTRDS (257 aa)). The chain crosses the membrane as a helical span at residues 1222–1250 (STPFEYFIMGLIVLNTVLLMMKFHRQSDA). Residues 1251 to 1255 (YKNTL) are Extracellular-facing. Residues 1256-1275 (KYMNMCFTGMFTVECILKIA) traverse the membrane as a helical segment. Residues 1276–1283 (AFGVRNFF) are Cytoplasmic-facing. Residues 1284–1302 (KDAWNTFDFITVIGSIVDA) traverse the membrane as a helical segment. Topologically, residues 1303–1309 (LVIEFGE) are extracellular. The helical transmembrane segment at 1310-1328 (NFINVGFLRLFRAARLIKL) threads the bilayer. At 1329-1347 (LRQGYTIRILLWTFVQSFK) the chain is on the cytoplasmic side. Residues 1348–1367 (ALPYVCLLIAMLFFIYAIIG) form a helical membrane-spanning segment. Topologically, residues 1368-1431 (MQVFGNIALD…AKAGKQEGGC (64 aa)) are extracellular. The phenylalkylamine binding stretch occupies residues 1430–1471 (GCGSNIAYAYFVSFIFFCSFLMLNLFVAVIMDNFDYLTRDSS). A helical membrane pass occupies residues 1432-1456 (GSNIAYAYFVSFIFFCSFLMLNLFV). The Cytoplasmic segment spans residues 1457–1904 (AVIMDNFDYL…HSDSDEDDWC (448 aa)). Positions 1476 to 1511 (HHLDEFVRIWAEYDPNATGKIHYTEMYDMLKNMDPP) constitute an EF-hand domain. Ca(2+)-binding residues include D1489, N1491, T1493, K1495, and E1500. Disordered regions lie at residues 1652 to 1694 (THTG…HEGP), 1710 to 1788 (THHP…HSYP), and 1870 to 1904 (GGRL…DDWC). The segment covering 1670 to 1681 (RSPSLRHSPGRP) has biased composition (low complexity). A compositionally biased stretch (basic and acidic residues) spans 1682–1691 (GYDHHGHYYH). Residues 1710 to 1725 (THHPHPSQYNHRHRMR) are compositionally biased toward basic residues. A compositionally biased stretch (low complexity) spans 1727–1740 (PWSASTSPARTPSP). A compositionally biased stretch (polar residues) spans 1751–1762 (GTTSLEQRSRSP). The segment covering 1771 to 1784 (PHTHQHYHRHHPHQ) has biased composition (basic residues).

It belongs to the calcium channel alpha-1 subunit (TC 1.A.1.11) family. CACNA1I subfamily. In terms of assembly, interacts with CATSPER1 and CATSPER2, leading to suppress T-type calcium channel activity.

The protein resides in the membrane. Voltage-sensitive calcium channels (VSCC) mediate the entry of calcium ions into excitable cells and are also involved in a variety of calcium-dependent processes, including muscle contraction, neurotransmitter release, gene expression, cell motility, cell division and cell death. The sequence is that of Voltage-dependent calcium channel type A subunit alpha-1 (CAC) from Apis mellifera (Honeybee).